The primary structure comprises 342 residues: NADPH-dependent methylglyoxal reductase GRE2 (342 aa).

NADP(+)-binding positions include glycine 7 to isoleucine 12, arginine 32, lysine 36, aspartate 57 to isoleucine 58, tyrosine 165, lysine 169, valine 199, and serine 216. The active-site Proton donor is the lysine 169. A Phosphoserine modification is found at serine 333.

This sequence belongs to the NAD(P)-dependent epimerase/dehydratase family. Dihydroflavonol-4-reductase subfamily. In terms of assembly, monomer. Post-translationally, the N-terminus is blocked.

The protein localises to the cytoplasm. It is found in the nucleus. It catalyses the reaction (S)-lactaldehyde + NADP(+) = methylglyoxal + NADPH + H(+). The catalysed reaction is 3-methylbutanol + NADP(+) = 3-methylbutanal + NADPH + H(+). It carries out the reaction 2,5-hexanedione + 2 NADPH + 2 H(+) = (2S,5S)-hexanediol + 2 NADP(+). The enzyme catalyses (S)-3-chloro-1-phenyl-1-propanol + NADP(+) = 3-chloro-1-phenyl-1-propanone + NADPH + H(+). Its activity is regulated as follows. Activated by glutathione. Its function is as follows. Catalyzes the irreversible reduction of the cytotoxic compound methylglyoxal (MG, 2-oxopropanal) to (S)-lactaldehyde as an alternative to detoxification of MG by glyoxalase I GLO1. MG is synthesized via a bypath of glycolysis from dihydroxyacetone phosphate and is believed to play a role in cell cycle regulation and stress adaptation. Also catalyzes the reduction of 3-methylbutanal to 3-methylbutanol. Acts as a suppressor of 3-methylbutanol-induced filamentation by modulating the levels of 3-methylbutanal, the signal to which cells respond by filamentation. Also involved in ergosterol metabolism. The sequence is that of NADPH-dependent methylglyoxal reductase GRE2 (GRE2) from Saccharomyces cerevisiae (strain ATCC 204508 / S288c) (Baker's yeast).